The sequence spans 603 residues: Adenine deaminase (603 aa).

It belongs to the metallo-dependent hydrolases superfamily. Adenine deaminase family. As to quaternary structure, homodimer. Mn(2+) is required as a cofactor.

The catalysed reaction is adenine + H2O + H(+) = hypoxanthine + NH4(+). This is Adenine deaminase from Klebsiella pneumoniae subsp. pneumoniae (strain ATCC 700721 / MGH 78578).